The chain runs to 447 residues: Protein TIC 40, chloroplastic (447 aa).

Residues 1–43 (MENLTLVSCSASSPKLLIGCNFTSSLKNPTGFSRRTPNIVLRC) constitute a chloroplast transit peptide. A chloroplast; inner membrane-targeting transit peptide spans 44-76 (SKISASAQSQSPSSRPENTGEIVVVKQRSKAFA). Residues 77-104 (SIFSSSRDQQTTSVASPSVPVPPPSSST) are Chloroplast intermembrane-facing. The helical transmembrane segment at 105–125 (IGSPLFWIGVGVGLSALFSYV) threads the bilayer. Over 126 to 447 (TSNLKKYAMQ…ISQLFPGMTG (322 aa)) the chain is Stromal. The segment covering 148-160 (QNSQFNNSGFPSG) has biased composition (low complexity). Disordered regions lie at residues 148 to 214 (QNSQ…DIEV) and 231 to 261 (KNYA…TNSP). Over residues 161–171 (SPFPFPFPPQT) the composition is skewed to pro residues. Low complexity predominate over residues 172-186 (SPASSPFQSQSQSSG). 2 STI1 domains span residues 310–344 (DPTV…RQQL) and 386–425 (PEEV…IMKY).

In terms of assembly, part of the Tic complex. Interacts with HSP93, TIC110 and LTD. In terms of tissue distribution, expressed in seedlings, flowers, leaves, stems and roots.

Its subcellular location is the plastid. The protein resides in the chloroplast inner membrane. In terms of biological role, involved in protein precursor import into chloroplasts. Part of the motor complex consisting of a co-chaperone (TIC40) and a chaperone (HSP93) associated with the import channel (TIC110). Causes the release of bound transit peptides from TIC110 and stimulates ATP hydrolysis by HSP93. Involved in reinsertion of proteins from the chloroplast stroma into the inner membrane. The protein is Protein TIC 40, chloroplastic (TIC40) of Arabidopsis thaliana (Mouse-ear cress).